A 213-amino-acid polypeptide reads, in one-letter code: Cytidylate kinase (213 aa).

7-15 lines the ATP pocket; sequence GPAASGKGT.

It belongs to the cytidylate kinase family. Type 1 subfamily.

The protein resides in the cytoplasm. The catalysed reaction is CMP + ATP = CDP + ADP. The enzyme catalyses dCMP + ATP = dCDP + ADP. This chain is Cytidylate kinase, found in Rhodospirillum rubrum (strain ATCC 11170 / ATH 1.1.1 / DSM 467 / LMG 4362 / NCIMB 8255 / S1).